Reading from the N-terminus, the 156-residue chain is Regulatory protein RecX (156 aa).

It belongs to the RecX family.

It is found in the cytoplasm. Modulates RecA activity. This is Regulatory protein RecX from Pseudomonas putida (strain ATCC 700007 / DSM 6899 / JCM 31910 / BCRC 17059 / LMG 24140 / F1).